Here is a 251-residue protein sequence, read N- to C-terminus: MRRPMVAGNWKMHGTRASVAELTKGLSNLALPSGVEVAVFPPALFINQVIDGLAGKEITVGAQNSAVQPEQGALTGEVAPEQLVEAGCKLVLIGHSERRQIIGETDEVLNRKFAAAQAKGLKPVLCIGETLEEREAGKTLEVVGRQLSSIIEAFGVKAFADAVIAYEPVWAIGTGLTATPQQAQDVHAAIRGQLAAEDAEVAAKVQLLYGGSVKAANAAELFGMPDIDGGLIGGASLNADEFGAICRAAGN.

Position 9-11 (9-11 (NWK)) interacts with substrate. The active-site Electrophile is H95. E167 serves as the catalytic Proton acceptor. Substrate contacts are provided by residues G173, S212, and 233–234 (GG).

It belongs to the triosephosphate isomerase family. In terms of assembly, homodimer.

It is found in the cytoplasm. It catalyses the reaction D-glyceraldehyde 3-phosphate = dihydroxyacetone phosphate. It participates in carbohydrate biosynthesis; gluconeogenesis. It functions in the pathway carbohydrate degradation; glycolysis; D-glyceraldehyde 3-phosphate from glycerone phosphate: step 1/1. Its function is as follows. Involved in the gluconeogenesis. Catalyzes stereospecifically the conversion of dihydroxyacetone phosphate (DHAP) to D-glyceraldehyde-3-phosphate (G3P). The protein is Triosephosphate isomerase of Pseudomonas putida (strain ATCC 700007 / DSM 6899 / JCM 31910 / BCRC 17059 / LMG 24140 / F1).